A 562-amino-acid chain; its full sequence is Carboxylesterase 1E (562 aa).

The signal sequence occupies residues 1–19 (MCLSALILVSLAAFTAGAG). An N-linked (GlcNAc...) asparagine glycan is attached at Asn-80. Cys-88 and Cys-117 form a disulfide bridge. The active-site Acyl-ester intermediate is Ser-222. A disulfide bridge connects residues Cys-274 and Cys-285. Asn-276 carries an N-linked (GlcNAc...) asparagine glycan. Residues Glu-354 and His-467 each act as charge relay system in the active site. A glycan (N-linked (GlcNAc...) asparagine) is linked at Asn-490. Positions 559 to 562 (HTEL) match the Prevents secretion from ER motif.

The protein belongs to the type-B carboxylesterase/lipase family.

Its subcellular location is the endoplasmic reticulum lumen. It localises to the microsome membrane. The catalysed reaction is a carboxylic ester + H2O = an alcohol + a carboxylate + H(+). The enzyme catalyses all-trans-retinyl hexadecanoate + H2O = all-trans-retinol + hexadecanoate + H(+). In terms of biological role, involved in the detoxification of xenobiotics and in the activation of ester and amide prodrugs. Hydrolyzes retinyl esters. This Mus musculus (Mouse) protein is Carboxylesterase 1E.